A 572-amino-acid chain; its full sequence is Arginine--tRNA ligase (572 aa).

Positions 122–132 match the 'HIGH' region motif; the sequence is PNLAKEMHVGH.

This sequence belongs to the class-I aminoacyl-tRNA synthetase family. Monomer.

It is found in the cytoplasm. It catalyses the reaction tRNA(Arg) + L-arginine + ATP = L-arginyl-tRNA(Arg) + AMP + diphosphate. The protein is Arginine--tRNA ligase of Neisseria meningitidis serogroup C / serotype 2a (strain ATCC 700532 / DSM 15464 / FAM18).